Reading from the N-terminus, the 581-residue chain is MRTLLTILAAGSLLAHITEDTSDLLQHVKFQSSNFENILTWDGRPESPPDTVYSVQYKTYGEEEWLEKEGCQRITQKSCNLTMETSNLTELYYARVTATDGAGRSATKMTNRFSSLQHTSIKPPDVTCIPKVRSIQMIVHPTYTPIRAQNGHQLTLENIFQDLLYHLKLRINHTYQMHLEGKQREFEFVGLTPDTEFLGTIMICIPNLFKESTPYMCRVKTLPDRTWTYSFSGAFLFSLGFLVAGLCYLSYRYITKPPPPPSSLNVQHILPFRPLQFIQEHTLIPVFDLSGSGGLAQPVQYSEVKVSNPTEPPGPPPRHSLPEIAYLGQPDLPVLRPSGGPPHQALPVLSYAPQAAPEGRPSSYAPQGALEAKPPSYTPQAVSETQLPSYTPRATPDNWPPSYGMCGEGSGRDSPPVTRSGPKHLGTKGQLQKEVPAGSCSPTGLSLQEVTPLAMEDPQEAKSSHQCLRVHTDSDSDSDTIGQREPGTRSSLKGQLPLLSSVQIEGHPGCLPLQTPSLPCSPTDKGPSPWGLLESLVCPSDEDPVSKTEAESPGLQAPDLESPTELDSLFRGLALTVQWES.

The N-terminal stretch at 1 to 15 is a signal peptide; sequence MRTLLTILAAGSLLA. Residues 16-228 lie on the Extracellular side of the membrane; sequence HITEDTSDLL…VKTLPDRTWT (213 aa). Fibronectin type-III domains lie at 18–115 and 141–221; these read TEDT…RFSS and PTYT…RVKT. Cysteines 71 and 79 form a disulfide. The N-linked (GlcNAc...) asparagine glycan is linked to N80. A disulfide bridge connects residues C128 and C217. Residues 229-249 traverse the membrane as a helical segment; that stretch reads YSFSGAFLFSLGFLVAGLCYL. The Cytoplasmic portion of the chain corresponds to 250–581; that stretch reads SYRYITKPPP…GLALTVQWES (332 aa). 2 disordered regions span residues 354–493 and 539–563; these read QAAP…SSLK and PSDE…LESP. Residues 378–389 are compositionally biased toward polar residues; it reads TPQAVSETQLPS. Phosphoserine occurs at positions 410 and 414. A compositionally biased stretch (polar residues) spans 440–449; it reads CSPTGLSLQE.

It belongs to the type II cytokine receptor family. Heterodimer with IL10RB and with IL20RB. Interacts with FBXW12; the interaction promotes ubiquitination of IL22RA1. In terms of processing, ubiquitinated.

Its subcellular location is the cell membrane. Its function is as follows. Component of the receptor for IL20, IL22 and IL24. Component of IL22 receptor formed by IL22RA1 and IL10RB enabling IL22 signaling via JAK/STAT pathways. IL22 also induces activation of MAPK1/MAPK3 and Akt kinases pathways. Component of one of the receptor for IL20 and IL24 formed by IL22RA1 and IL20RB also signaling through STATs activation. Mediates IL24 antiangiogenic activity as well as IL24 inhibitory effect on endothelial cell tube formation and differentiation. The chain is Interleukin-22 receptor subunit alpha-1 (IL22RA1) from Bos taurus (Bovine).